Consider the following 491-residue polypeptide: mRNA cleavage and polyadenylation factor clp1 (491 aa).

The ATP site is built by E28 and K78. The tract at residues R128–P160 is disordered. Residues A130–G148 are compositionally biased toward low complexity. Position 171–176 (G171–S176) interacts with ATP.

Belongs to the Clp1 family. Clp1 subfamily. In terms of assembly, component of a pre-mRNA cleavage factor complex. Interacts directly with PCF11.

Its subcellular location is the nucleus. In terms of biological role, required for endonucleolytic cleavage during polyadenylation-dependent pre-mRNA 3'-end formation. The polypeptide is mRNA cleavage and polyadenylation factor clp1 (paa-7) (Neurospora crassa (strain ATCC 24698 / 74-OR23-1A / CBS 708.71 / DSM 1257 / FGSC 987)).